A 374-amino-acid polypeptide reads, in one-letter code: Chaperone protein DnaJ (374 aa).

The region spanning 5-70 is the J domain; sequence DYYEVLGVAK…QKRAAYDRYG (66 aa). The CR-type zinc-finger motif lies at 134-212; it reads GFDTEIRVPS…CDGVGRIRRN (79 aa). Cys147, Cys150, Cys164, Cys167, Cys186, Cys189, Cys200, and Cys203 together coordinate Zn(2+). CXXCXGXG motif repeat units follow at residues 147–154, 164–171, 186–193, and 200–207; these read CDTCHGSG, CRTCGGSG, CPTCHGTG, and CPSCDGVG.

This sequence belongs to the DnaJ family. Homodimer. Zn(2+) serves as cofactor.

The protein localises to the cytoplasm. Functionally, participates actively in the response to hyperosmotic and heat shock by preventing the aggregation of stress-denatured proteins and by disaggregating proteins, also in an autonomous, DnaK-independent fashion. Unfolded proteins bind initially to DnaJ; upon interaction with the DnaJ-bound protein, DnaK hydrolyzes its bound ATP, resulting in the formation of a stable complex. GrpE releases ADP from DnaK; ATP binding to DnaK triggers the release of the substrate protein, thus completing the reaction cycle. Several rounds of ATP-dependent interactions between DnaJ, DnaK and GrpE are required for fully efficient folding. Also involved, together with DnaK and GrpE, in the DNA replication of plasmids through activation of initiation proteins. The polypeptide is Chaperone protein DnaJ (Bordetella petrii (strain ATCC BAA-461 / DSM 12804 / CCUG 43448)).